The sequence spans 63 residues: UPF0337 protein Atu0782 (63 aa).

The disordered stretch occupies residues 1–63; that stretch reads MGSTSDKIAG…DAVKGAVDRM (63 aa). A compositionally biased stretch (basic and acidic residues) spans 51–63; sequence KAKDAVKGAVDRM.

It belongs to the UPF0337 (CsbD) family.

This chain is UPF0337 protein Atu0782, found in Agrobacterium fabrum (strain C58 / ATCC 33970) (Agrobacterium tumefaciens (strain C58)).